The following is a 491-amino-acid chain: Delayed-rectifier potassium channel regulatory subunit KCNS3 (491 aa).

The Cytoplasmic segment spans residues 1 to 182 (MVFGEFFHRP…IRMENPAYCL (182 aa)). Residues 183–204 (SAKLIAISSLSVVLASIVAMCV) form a helical membrane-spanning segment. The Extracellular segment spans residues 205–220 (HSMSEFQNEDGEVDDP). The chain crosses the membrane as a helical span at residues 221–243 (VLEGVEIACIAWFTGELAVRLAA). Over 244 to 254 (APCQKKFWKNP) the chain is Cytoplasmic. Residues 255 to 275 (LNIIDFVSIIPFYATLAVDTK) form a helical membrane-spanning segment. At 276–285 (EEESEDIENM) the chain is on the extracellular side. The helical; Voltage-sensor transmembrane segment at 286–306 (GKVVQILRLMRIFRILKLARH) threads the bilayer. Topologically, residues 307 to 321 (SVGLRSLGATLRHSY) are cytoplasmic. A helical transmembrane segment spans residues 322 to 343 (HEVGLLLLFLSVGISIFSVLIY). The Extracellular portion of the chain corresponds to 344–357 (SVEKDDHTSSLTSI). An intramembrane region (helical) is located at residues 358 to 369 (PICWWWATISMT). Residues 370–375 (TVGYGD) carry the Selectivity filter motif. The stretch at 370 to 377 (TVGYGDTH) is an intramembrane region. Residues 378–384 (PVTLAGK) are Extracellular-facing. A helical membrane pass occupies residues 385-413 (LIASTCIICGILVVALPITIIFNKFSKYY). Residues 414–491 (QKQKDIDVDQ…TTSLENCTAK (78 aa)) are Cytoplasmic-facing.

This sequence belongs to the potassium channel family. S (TC 1.A.1.2) subfamily. Kv9.3/KCNS3 sub-subfamily. In terms of assembly, heterotetramer with KCNB1. Does not form homomultimers. As to expression, detected in whole normal term placental and placental chorionic plate arteries and veins. Detected in syncytiotrophoblast and in blood vessel endothelium within intermediate villi and chorionic plate (at protein level). Detected in most tissues, but not in peripheral blood lymphocytes. The highest levels of expression are in lung.

The protein localises to the cell membrane. Functionally, potassium channel regulatory subunit that modulates the delayed rectifier potassium channel activity of KCNB1 by namely slowing down the deactivation and inactivation time constants. While it does not form functional channel on its own, it can form functional heterotetrameric channels with KCNB1. The sequence is that of Delayed-rectifier potassium channel regulatory subunit KCNS3 from Homo sapiens (Human).